The following is a 633-amino-acid chain: Chaperone protein DnaK (633 aa).

A Phosphothreonine; by autocatalysis modification is found at T198.

This sequence belongs to the heat shock protein 70 family.

Acts as a chaperone. This Rhodopseudomonas palustris (strain BisA53) protein is Chaperone protein DnaK.